A 456-amino-acid polypeptide reads, in one-letter code: Proline--tRNA ligase (456 aa).

This sequence belongs to the class-II aminoacyl-tRNA synthetase family. ProS type 3 subfamily. In terms of assembly, homodimer.

The protein resides in the cytoplasm. It catalyses the reaction tRNA(Pro) + L-proline + ATP = L-prolyl-tRNA(Pro) + AMP + diphosphate. Catalyzes the attachment of proline to tRNA(Pro) in a two-step reaction: proline is first activated by ATP to form Pro-AMP and then transferred to the acceptor end of tRNA(Pro). The protein is Proline--tRNA ligase of Methanococcus aeolicus (strain ATCC BAA-1280 / DSM 17508 / OCM 812 / Nankai-3).